The primary structure comprises 69 residues: UPF0248 protein AF_0420 (69 aa).

Belongs to the UPF0248 family.

The sequence is that of UPF0248 protein AF_0420 from Archaeoglobus fulgidus (strain ATCC 49558 / DSM 4304 / JCM 9628 / NBRC 100126 / VC-16).